Consider the following 104-residue polypeptide: Flagellar hook-basal body complex protein FliE (104 aa).

Belongs to the FliE family.

It is found in the bacterial flagellum basal body. This Salmonella typhi protein is Flagellar hook-basal body complex protein FliE.